A 271-amino-acid polypeptide reads, in one-letter code: Uridine-cytidine kinase 1-B (271 aa).

24-32 (GGTASGKST) provides a ligand contact to ATP. Residues Asp81, Tyr109, His114, Arg163, Arg172, and Gln180 each contribute to the substrate site. Asp209 lines the ATP pocket. Residues 240-271 (RSQKRTLPGQGDSGGLLLQGKRTHLESSSRPH) are disordered. Residues 246-259 (LPGQGDSGGLLLQG) show a composition bias toward low complexity. Residues 262–271 (THLESSSRPH) show a composition bias toward basic and acidic residues.

The protein belongs to the uridine kinase family.

The catalysed reaction is uridine + ATP = UMP + ADP + H(+). It carries out the reaction cytidine + ATP = CMP + ADP + H(+). It functions in the pathway pyrimidine metabolism; CTP biosynthesis via salvage pathway; CTP from cytidine: step 1/3. Its pathway is pyrimidine metabolism; UMP biosynthesis via salvage pathway; UMP from uridine: step 1/1. Its function is as follows. Phosphorylates uridine and cytidine to uridine monophosphate and cytidine monophosphate. Does not phosphorylate deoxyribonucleosides or purine ribonucleosides. Can use ATP or GTP as a phosphate donor. This chain is Uridine-cytidine kinase 1-B (uck1-b), found in Xenopus laevis (African clawed frog).